The following is a 261-amino-acid chain: tRNA pseudouridine synthase A (261 aa).

The active-site Nucleophile is Asp-51. Tyr-109 lines the substrate pocket.

The protein belongs to the tRNA pseudouridine synthase TruA family. In terms of assembly, homodimer.

It carries out the reaction uridine(38/39/40) in tRNA = pseudouridine(38/39/40) in tRNA. Functionally, formation of pseudouridine at positions 38, 39 and 40 in the anticodon stem and loop of transfer RNAs. In Shewanella baltica (strain OS223), this protein is tRNA pseudouridine synthase A.